We begin with the raw amino-acid sequence, 346 residues long: Heat-inducible transcription repressor HrcA (346 aa).

The protein belongs to the HrcA family.

Functionally, negative regulator of class I heat shock genes (grpE-dnaK-dnaJ and groELS operons). Prevents heat-shock induction of these operons. This Fructilactobacillus sanfranciscensis (Lactobacillus sanfranciscensis) protein is Heat-inducible transcription repressor HrcA.